Reading from the N-terminus, the 367-residue chain is Mitogen-activated protein kinase 12 (367 aa).

The 285-residue stretch at 27–311 (YQDLQPVGSG…AAEALTHPYF (285 aa)) folds into the Protein kinase domain. ATP contacts are provided by residues 33–41 (VGSGAYGAV) and Lys-56. Asp-153 serves as the catalytic Proton acceptor. Thr-183 is subject to Phosphothreonine. The TXY signature appears at 183–185 (TGY). Tyr-185 is subject to Phosphotyrosine.

It belongs to the protein kinase superfamily. CMGC Ser/Thr protein kinase family. MAP kinase subfamily. As to quaternary structure, monomer. Interacts with the PDZ domain of the syntrophin SNTA1. Interacts with SH3BP5, LIN7C, SCRIB and SYNJ2BP. Interacts with PTPN4; this interaction induces the activation of PTPN4 phosphatase activity. Mg(2+) serves as cofactor. In terms of processing, dually phosphorylated on Thr-183 and Tyr-185 by MAP2K3/MKK3 and MAP2K6/MKK6, which activates the enzyme. Post-translationally, ubiquitinated. Ubiquitination leads to degradation by the proteasome pathway. In terms of tissue distribution, highly expressed in skeletal muscle. Also expressed in the heart, particularly in cardiac myocytes, lung, thymus and testes.

Its subcellular location is the cytoplasm. The protein localises to the nucleus. It localises to the mitochondrion. The catalysed reaction is L-seryl-[protein] + ATP = O-phospho-L-seryl-[protein] + ADP + H(+). It catalyses the reaction L-threonyl-[protein] + ATP = O-phospho-L-threonyl-[protein] + ADP + H(+). Its activity is regulated as follows. Activated by phosphorylation on threonine and tyrosine. MAP2K3/MKK3 and MAP2K6/MKK6 are both essential for the activation of MAPK12 induced by environmental stress, whereas MAP2K6/MKK6 is the major MAPK12 activator in response to TNF-alpha. Its function is as follows. Serine/threonine kinase which acts as an essential component of the MAP kinase signal transduction pathway. MAPK12 is one of the four p38 MAPKs which play an important role in the cascades of cellular responses evoked by extracellular stimuli such as pro-inflammatory cytokines or physical stress leading to direct activation of transcription factors such as ELK1 and ATF2. Accordingly, p38 MAPKs phosphorylate a broad range of proteins and it has been estimated that they may have approximately 200 to 300 substrates each. Some of the targets are downstream kinases such as MAPKAPK2, which are activated through phosphorylation and further phosphorylate additional targets. Plays a role in myoblast differentiation and also in the down-regulation of cyclin D1 in response to hypoxia in adrenal cells suggesting MAPK12 may inhibit cell proliferation while promoting differentiation. Phosphorylates DLG1. Following osmotic shock, MAPK12 in the cell nucleus increases its association with nuclear DLG1, thereby causing dissociation of DLG1-SFPQ complexes. This function is independent of its catalytic activity and could affect mRNA processing and/or gene transcription to aid cell adaptation to osmolarity changes in the environment. Regulates UV-induced checkpoint signaling and repair of UV-induced DNA damage and G2 arrest after gamma-radiation exposure. MAPK12 is involved in the regulation of SLC2A1 expression and basal glucose uptake in L6 myotubes; and negatively regulates SLC2A4 expression and contraction-mediated glucose uptake in adult skeletal muscle. C-Jun (JUN) phosphorylation is stimulated by MAPK14 and inhibited by MAPK12, leading to a distinct AP-1 regulation. MAPK12 is required for the normal kinetochore localization of PLK1, prevents chromosomal instability and supports mitotic cell viability. MAPK12-signaling is also positively regulating the expansion of transient amplifying myogenic precursor cells during muscle growth and regeneration. This chain is Mitogen-activated protein kinase 12 (Mapk12), found in Mus musculus (Mouse).